Consider the following 577-residue polypeptide: Arginine--tRNA ligase (577 aa).

The short motif at 122–132 (PNVAKEMHVGH) is the 'HIGH' region element.

It belongs to the class-I aminoacyl-tRNA synthetase family. As to quaternary structure, monomer.

Its subcellular location is the cytoplasm. The enzyme catalyses tRNA(Arg) + L-arginine + ATP = L-arginyl-tRNA(Arg) + AMP + diphosphate. The polypeptide is Arginine--tRNA ligase (Klebsiella pneumoniae subsp. pneumoniae (strain ATCC 700721 / MGH 78578)).